The chain runs to 100 residues: Urease subunit gamma (100 aa).

It belongs to the urease gamma subunit family. As to quaternary structure, heterotrimer of UreA (gamma), UreB (beta) and UreC (alpha) subunits. Three heterotrimers associate to form the active enzyme.

The protein resides in the cytoplasm. It carries out the reaction urea + 2 H2O + H(+) = hydrogencarbonate + 2 NH4(+). The protein operates within nitrogen metabolism; urea degradation; CO(2) and NH(3) from urea (urease route): step 1/1. The chain is Urease subunit gamma from Proteus hauseri.